The following is a 475-amino-acid chain: Putative histidine permease (475 aa).

Helical transmembrane passes span 20-40, 44-64, 87-107, 127-147, 162-182, 199-219, 246-266, 277-297, 341-361, 363-383, 410-430, and 434-454; these read LFMI…TGYT, AGPG…YLVM, FIGP…WVVT, SVWM…AFSV, IVTI…LISL, GLFP…SFAF, VAWR…GLIS, FVAV…NFVI, ALMI…VAPG, VYVV…MSIA, YPLM…GLAF, and QRIA…IYHF.

This sequence belongs to the amino acid-polyamine-organocation (APC) superfamily.

The protein localises to the cell membrane. The protein is Putative histidine permease (hutM) of Bacillus subtilis (strain 168).